The chain runs to 210 residues: 23.5 kDa heat shock protein, mitochondrial (210 aa).

The transit peptide at 1–20 directs the protein to the mitochondrion; that stretch reads MASSSALALRRLLSSSTVAV. The region spanning 102–210 is the sHSP domain; the sequence is MGASGVRRGW…RNNIRHINVD (109 aa).

It belongs to the small heat shock protein (HSP20) family. As to quaternary structure, may form oligomeric structures.

The protein resides in the mitochondrion. The chain is 23.5 kDa heat shock protein, mitochondrial (HSP23.5) from Arabidopsis thaliana (Mouse-ear cress).